The chain runs to 273 residues: NADPH-dependent 7-cyano-7-deazaguanine reductase (273 aa).

81 to 83 serves as a coordination point for substrate; that stretch reads VES. 83 to 84 is an NADPH binding site; the sequence is SK. Cys-179 serves as the catalytic Thioimide intermediate. The active-site Proton donor is the Asp-186. Residue 218-219 coordinates substrate; the sequence is AE. Position 247–248 (247–248) interacts with NADPH; the sequence is RG.

Belongs to the GTP cyclohydrolase I family. QueF type 2 subfamily. In terms of assembly, homodimer.

The protein resides in the cytoplasm. It carries out the reaction 7-aminomethyl-7-carbaguanine + 2 NADP(+) = 7-cyano-7-deazaguanine + 2 NADPH + 3 H(+). It functions in the pathway tRNA modification; tRNA-queuosine biosynthesis. Catalyzes the NADPH-dependent reduction of 7-cyano-7-deazaguanine (preQ0) to 7-aminomethyl-7-deazaguanine (preQ1). The polypeptide is NADPH-dependent 7-cyano-7-deazaguanine reductase (Rickettsia bellii (strain OSU 85-389)).